We begin with the raw amino-acid sequence, 325 residues long: Lipoyl synthase (325 aa).

[4Fe-4S] cluster is bound by residues cysteine 72, cysteine 77, cysteine 83, cysteine 98, cysteine 102, cysteine 105, and serine 312. Residues 84 to 301 (FSSGTATFMI…AEEGMKMGFK (218 aa)) enclose the Radical SAM core domain.

Belongs to the radical SAM superfamily. Lipoyl synthase family. The cofactor is [4Fe-4S] cluster.

The protein localises to the cytoplasm. It carries out the reaction [[Fe-S] cluster scaffold protein carrying a second [4Fe-4S](2+) cluster] + N(6)-octanoyl-L-lysyl-[protein] + 2 oxidized [2Fe-2S]-[ferredoxin] + 2 S-adenosyl-L-methionine + 4 H(+) = [[Fe-S] cluster scaffold protein] + N(6)-[(R)-dihydrolipoyl]-L-lysyl-[protein] + 4 Fe(3+) + 2 hydrogen sulfide + 2 5'-deoxyadenosine + 2 L-methionine + 2 reduced [2Fe-2S]-[ferredoxin]. Its pathway is protein modification; protein lipoylation via endogenous pathway; protein N(6)-(lipoyl)lysine from octanoyl-[acyl-carrier-protein]: step 2/2. Its function is as follows. Catalyzes the radical-mediated insertion of two sulfur atoms into the C-6 and C-8 positions of the octanoyl moiety bound to the lipoyl domains of lipoate-dependent enzymes, thereby converting the octanoylated domains into lipoylated derivatives. This is Lipoyl synthase from Stutzerimonas stutzeri (strain A1501) (Pseudomonas stutzeri).